Reading from the N-terminus, the 1146-residue chain is Elicitor of plant defense protein 1 (1146 aa).

Disordered regions lie at residues 25–75 and 156–226; these read DPLP…RLSN and ARPP…PRQG. Positions 164–177 are enriched in basic and acidic residues; it reads RAERIKAEDSDQSG. The region spanning 246 to 500 is the uDENN domain; it reads PLNTDPNMHP…NLCTEAFSPL (255 aa). The cDENN domain occupies 522-656; it reads VNEIPGSRTI…HRRKLHALLQ (135 aa). A dDENN domain is found at 658–1016; sequence AAPAKLRYGV…ERETKPGTTA (359 aa). The disordered stretch occupies residues 730-806; that stretch reads LHSKVDPNKP…RRSSSFGVDK (77 aa). The segment covering 732–743 has biased composition (basic and acidic residues); that stretch reads SKVDPNKPDRPG. Low complexity predominate over residues 744 to 760; the sequence is TSKSTRTSPPSSVSPVS. The segment covering 769-783 has biased composition (polar residues); it reads TPVSRSDSGFALTST. The segment covering 784 to 797 has biased composition (basic and acidic residues); that stretch reads LREKRSRNFDEKTR. Residues 883-931 form a Phorbol-ester/DAG-type zinc finger; it reads GHCFNWEEGALSSSCSVCDDRAEGDGIYKCSGCSAFAHGRCLGCVSLAC. The interval 1121 to 1146 is disordered; the sequence is PRPEQRGTRGLVRKQVPSMLGTSPTN.

This sequence belongs to the EPD1 elicitor family. As to quaternary structure, interacts with host cotton EIR5A (AC A0A5J5T2N2) and EIR5D (AC A0A5J5NT52) and host N.benthamiana EIR (AC P0DXJ0).

The protein resides in the secreted. The protein localises to the host cell. Functionally, acts as an elicitor that triggers defense responses in both Nicotiana benthamiana and cotton plants. Triggers the accumulation of reactive oxygen species (ROS) and the activation of cell death in cotton plants. Induces significantly enhanced resistance of Nicotiana benthamiana to both the broad-host-range filamentous pathogen Botrytis cinerea and the semibiotrophic pathogen Phytophthora capsici. Stimulates the expression of EIR5A (AC A0A5J5T2N2) and EIR5D (AC A0A5J5NT52) in cotton plants and recognition of EPD1 potentiates EIRs to enhance cotton PAMP-triggered immunity (PTI). This Verticillium dahliae (strain VdLs.17 / ATCC MYA-4575 / FGSC 10137) (Verticillium wilt) protein is Elicitor of plant defense protein 1.